An 81-amino-acid chain; its full sequence is Large ribosomal subunit protein bL27 (81 aa).

Residues 1 to 11 are compositionally biased toward polar residues; the sequence is MATSKSGGSSK. The tract at residues 1–23 is disordered; it reads MATSKSGGSSKNGRDSISKRLGV.

Belongs to the bacterial ribosomal protein bL27 family.

The protein is Large ribosomal subunit protein bL27 of Borrelia garinii subsp. bavariensis (strain ATCC BAA-2496 / DSM 23469 / PBi) (Borreliella bavariensis).